The chain runs to 449 residues: Hyaluronidase-1 (449 aa).

The signal sequence occupies residues 1-39 (MKPFSPEVSPDPCPATAAHLLRTYTLFLTLLELAQGCRG). 2 cysteine pairs are disulfide-bonded: C58/C348 and C222/C236. 2 N-linked (GlcNAc...) asparagine glycosylation sites follow: N85 and N114. E146 serves as the catalytic Proton donor. 3 N-linked (GlcNAc...) asparagine glycosylation sites follow: N231, N252, and N365. Intrachain disulfides connect C373/C384, C378/C433, and C435/C444. Residues 433 to 444 (CRCYRGWSGEWC) form the EGF-like domain.

Belongs to the glycosyl hydrolase 56 family.

It is found in the secreted. Its subcellular location is the lysosome. It catalyses the reaction Random hydrolysis of (1-&gt;4)-linkages between N-acetyl-beta-D-glucosamine and D-glucuronate residues in hyaluronate.. Functionally, may have a role in promoting tumor progression. May block the TGFB1-enhanced cell growth. Overexpression of HYAL1 suppressed the growth rate of colon carcinoma cell tumors in an experimental model. This is Hyaluronidase-1 (Hyal1) from Rattus norvegicus (Rat).